The primary structure comprises 410 residues: Toluene 1,2-dioxygenase system ferredoxin--NAD(+) reductase component (410 aa).

An FAD-binding site is contributed by 4 to 35 (HVAIIGNGVGGFTTAQALRAEGFEGRISLIGD). Residue 145-173 (RLLIVGGGLIGCEVATTARKLGLSVTILE) participates in NAD(+) binding.

The protein belongs to the bacterial ring-hydroxylating dioxygenase ferredoxin reductase family. As to quaternary structure, this dioxygenase system consists of four proteins: the two subunits of the hydroxylase component (todC1 and todC2), a ferredoxin (TodB) and a ferredoxin reductase (TodA). FAD serves as cofactor.

It carries out the reaction 2 reduced [2Fe-2S]-[ferredoxin] + NAD(+) + H(+) = 2 oxidized [2Fe-2S]-[ferredoxin] + NADH. Its pathway is xenobiotic degradation; toluene degradation. Its function is as follows. Part of the electron transfer component of toluene 1,2-dioxygenase, transfers electrons from ferredoxin (TodB) to NADH. The protein is Toluene 1,2-dioxygenase system ferredoxin--NAD(+) reductase component (todA) of Pseudomonas putida (strain ATCC 700007 / DSM 6899 / JCM 31910 / BCRC 17059 / LMG 24140 / F1).